The sequence spans 621 residues: GPI-anchor transamidase component GPAA1 (621 aa).

At 2 to 19 (GLLSDPVRRRALARLVLR) the chain is on the cytoplasmic side. The chain crosses the membrane as a helical span at residues 20–41 (LNAPLCVLSYVAGIAWFLALVF). Residues 42-370 (PPLTQRTYMS…LLPGLSRFVS (329 aa)) are Lumenal-facing. Residues Tyr49 and Ser51 each contribute to the a 2-acyl-6-[6-phosphoethanolamine-alpha-D-mannosyl-(1-&gt;2)-6-phosphoethanolamine-alpha-D-mannosyl-(1-&gt;6)-2-phosphoethanolamine-alpha-D-mannosyl-(1-&gt;4)-alpha-D-glucosaminyl]-1-(1-radyl,2-acyl-sn-glycero-3-phospho)-1D-myo-inositol site. A glycan (N-linked (GlcNAc...) asparagine) is linked at Asn203. A disulfide bridge connects residues Cys259 and Cys266. Residues His354, Gln355, and Ser356 each contribute to the a 2-acyl-6-[6-phosphoethanolamine-alpha-D-mannosyl-(1-&gt;2)-6-phosphoethanolamine-alpha-D-mannosyl-(1-&gt;6)-2-phosphoethanolamine-alpha-D-mannosyl-(1-&gt;4)-alpha-D-glucosaminyl]-1-(1-radyl,2-acyl-sn-glycero-3-phospho)-1D-myo-inositol site. Gln355 serves as a coordination point for Mg(2+). The helical transmembrane segment at 371–393 (IGLYMPAVGFLLLVLGLKALELW) threads the bilayer. Topologically, residues 394 to 425 (MQLHEAGMGLEEPGGAPGPSVPLPPSQGVGLA) are cytoplasmic. A helical membrane pass occupies residues 426–450 (SLVAPLLISQAMGLALYVLPVLGQH). Residues 451-462 (VATQHFPVAEAE) lie on the Lumenal side of the membrane. A helical transmembrane segment spans residues 463-483 (AVVLTLLAIYAAGLALPHNTH). The Cytoplasmic segment spans residues 484-495 (RVVSTQAPDRGW). The next 2 membrane-spanning stretches (helical) occupy residues 496–519 (MALKLVALIYLALQLGCIALTNFS) and 520–536 (LGFLLATTMVPTAALAK). Residues 537–540 (PHGP) lie on the Cytoplasmic side of the membrane. A helical transmembrane segment spans residues 541–563 (RTLYAALLVLTSPAATLLGSLFL). The Lumenal portion of the chain corresponds to 564–597 (WRELQEAPLSLAEGWQLFLAALAQGVLEHHTYGA). The helical transmembrane segment at 598–619 (LLFPLLSLGLYPCWLLFWNVLF) threads the bilayer. Residues 620–621 (WK) are Cytoplasmic-facing.

As to quaternary structure, heteropentamer. Part of the GPI-anchor transamidase complex, consisting of PIGK, PIGT, PIGS, PIGU and GAA1. Interacts with PIGK. In terms of tissue distribution, ubiquitously expressed in fetal and adult tissues. Expressed at higher levels in fetal tissues than adult tissues.

Its subcellular location is the endoplasmic reticulum membrane. Its pathway is glycolipid biosynthesis; glycosylphosphatidylinositol-anchor biosynthesis. Functionally, component of the glycosylphosphatidylinositol-anchor (GPI-anchor) transamidase (GPI-T) complex that catalyzes the formation of the linkage between a proprotein and a GPI-anchor and participates in GPI anchored protein biosynthesis. Binds GPI-anchor. The protein is GPI-anchor transamidase component GPAA1 of Homo sapiens (Human).